The primary structure comprises 469 residues: KASVGFKAGVKEYKLTYYTPEYEVKDTDILAAFRVTPQPGVPPEEAGAAVAAESSTGTWTTVWTDGLTSLDRYKGRCYHIEPVAGEENQYICYVAYPLDLFEEGSVTNMFTSIVGNVFGFKALRALRLEDLRIPTSYTKTFQGPPHGIQVERDKLNKYGRPLLGCTIKPKLGLSAKNYGRAVYECLRGGLDFTKDDENVNSQPFMRWRDRFVFCAEAIYKAQAETGEIKGHYLNATAGTCEEMMKRAIFARELGVPIVMHDYLTGGFTANTSLAHYCRDNGLLLHIHRAMHAVIDRQKNHGMHFRVLAKALRLSGGDHIHAGTVVGKLEGERDITLGFVDLLRDDFIEKDRSRGIYFTQDWVSLPGVLPVASGGIHVWHMPALTEIFGDDSVLQFGGGTLGHPWGNAPGAVANRVALEACVKARNEGRDLAREGNEIIREASKWSPELAAACEVWKEIKFEFQAVDTLD.

N6,N6,N6-trimethyllysine is present on K7. Residues N116 and T166 each contribute to the substrate site. Catalysis depends on K168, which acts as the Proton acceptor. K170 contacts substrate. Positions 194, 196, and 197 each coordinate Mg(2+). Residue K194 is modified to N6-carboxylysine. H287 acts as the Proton acceptor in catalysis. 3 residues coordinate substrate: R288, H320, and S372.

This sequence belongs to the RuBisCO large chain family. Type I subfamily. As to quaternary structure, heterohexadecamer of 8 large chains and 8 small chains; disulfide-linked. The disulfide link is formed within the large subunit homodimers. Mg(2+) serves as cofactor. Post-translationally, the disulfide bond which can form in the large chain dimeric partners within the hexadecamer appears to be associated with oxidative stress and protein turnover.

It is found in the plastid. The protein resides in the chloroplast. It carries out the reaction 2 (2R)-3-phosphoglycerate + 2 H(+) = D-ribulose 1,5-bisphosphate + CO2 + H2O. The enzyme catalyses D-ribulose 1,5-bisphosphate + O2 = 2-phosphoglycolate + (2R)-3-phosphoglycerate + 2 H(+). In terms of biological role, ruBisCO catalyzes two reactions: the carboxylation of D-ribulose 1,5-bisphosphate, the primary event in carbon dioxide fixation, as well as the oxidative fragmentation of the pentose substrate in the photorespiration process. Both reactions occur simultaneously and in competition at the same active site. The protein is Ribulose bisphosphate carboxylase large chain of Pachira aquatica (Guiana chestnut).